The primary structure comprises 193 residues: Ion-translocating oxidoreductase complex subunit A (193 aa).

6 consecutive transmembrane segments (helical) span residues 4–24 (LLLILIGAVLVNNFVLARFLG), 39–59 (LGMGMAVTFVMVVASGCTWVL), 72–92 (LQTIAFILVIATLVQMVEMIV), 102–122 (SLGIFLPLITTNCAVLGLAVL), 134–154 (LVFAFGGAVGFTLALVLFAGL), and 171–191 (PIELITAGLLALAFMGFAGLV).

This sequence belongs to the NqrDE/RnfAE family. As to quaternary structure, the complex is composed of six subunits: RnfA, RnfB, RnfC, RnfD, RnfE and RnfG.

It is found in the cell inner membrane. Part of a membrane-bound complex that couples electron transfer with translocation of ions across the membrane. The protein is Ion-translocating oxidoreductase complex subunit A of Syntrophotalea carbinolica (strain DSM 2380 / NBRC 103641 / GraBd1) (Pelobacter carbinolicus).